The following is an 865-amino-acid chain: MIKAIIGKIIGTRNDRWIKQYKKQVLTINALEPTYEKMSDVELQNAFEELKKRVRSTEKNLQEKTLLEVLPESFAITREASKRILKMRHFDVQLIGGMVLNDGKIAEMKTGEGKTLVATLAVALNALKGESVYVVTVNDYLAHRDSKEMEPLYHFLGYSVGTITASVRDDDERLEIYSKDIVYGTNNEFGFDYLRDNMKYSLEHKVQKSHAFAIVDEVDSILIDEARTPLIISGPVDRRMENYNKADEVAKSMQVETDFTIDEKNRTILITEEGIKKAENLFGVDNLYKIENAALSHHLDQALKANYLFFIDKDYIVANNEVVIVDEFTGRLSEGRRFSEGLHQALEAKEGVSIKEESQTLADITFQNYFRMFSKLSGMTGTAQTEATEFLEIYNLEVVSIPTNLAIKRKDLNDLIYKSEKEKFDAVILKIKELHDKGQPVLVGTASIEKSETLHALLKKERIPHTVLNAKQHTKEAEIIKDAGLKGAVTIATNMAGRGVDIKLTDEIKELGGLYIIGTERHESRRIDNQLRGRSGRQGDPGTSQFYLSLEDNLLRIFGSDRIKGVMEKLGLKDGEHIESKLVTRAVENAQKKVENLHFESRKHLLEYDDVANEQRKSVYKFRDELLDINYDISAKIAENREYALNQIFSKLKAFDHQNLSEEELLGLKNVLKEDFNAHVELEDLEKASPIEKFVAEKLKSDYENKMKVLDSEQRSRIERIVYLQILDNAWREHLYTMDNLKTGINLRGYNQKDPLVEYKKESYNLFLEFIEDIKIEAIKTFSKIQFENEQDSSDAERYLDNFSEEREHESVTYRHEETLDEDLNVAMKAFSKTPKRNEPCPCQSGKKYKDCCAKSGPKKGLFAK.

ATP is bound by residues Gln93, 111–115, and Asp501; that span reads GEGKT. 4 residues coordinate Zn(2+): Cys841, Cys843, Cys852, and Cys853.

It belongs to the SecA family. In terms of assembly, monomer and homodimer. Part of the essential Sec protein translocation apparatus which comprises SecA, SecYEG and auxiliary proteins SecDF-YajC and YidC. Zn(2+) is required as a cofactor.

It localises to the cell inner membrane. Its subcellular location is the cytoplasm. The catalysed reaction is ATP + H2O + cellular proteinSide 1 = ADP + phosphate + cellular proteinSide 2.. Its function is as follows. Part of the Sec protein translocase complex. Interacts with the SecYEG preprotein conducting channel. Has a central role in coupling the hydrolysis of ATP to the transfer of proteins into and across the cell membrane, serving as an ATP-driven molecular motor driving the stepwise translocation of polypeptide chains across the membrane. This is Protein translocase subunit SecA from Helicobacter pylori (strain HPAG1).